A 324-amino-acid chain; its full sequence is Cytochrome c biogenesis protein CcsA (324 aa).

The next 8 membrane-spanning stretches (helical) occupy residues 15–35 (FSIV…DEII), 44–64 (GMIA…IYSG), 71–91 (LYES…VPYF), 98–118 (LSTI…SGLL), 143–163 (MILG…LLVL), 228–248 (VISL…VWAN), 255–275 (WNWD…AVYL), and 289–309 (AIVA…VNLL).

The protein belongs to the CcmF/CycK/Ccl1/NrfE/CcsA family. May interact with Ccs1.

The protein resides in the plastid. The protein localises to the chloroplast thylakoid membrane. Its function is as follows. Required during biogenesis of c-type cytochromes (cytochrome c6 and cytochrome f) at the step of heme attachment. This is Cytochrome c biogenesis protein CcsA from Daucus carota (Wild carrot).